A 236-amino-acid chain; its full sequence is Small ribosomal subunit protein uS3 (236 aa).

The 69-residue stretch at 39–107 folds into the KH type-2 domain; sequence IREILHKELK…DVVINIVEIR (69 aa). The interval 213-236 is disordered; the sequence is MAQDKRMNEGGGESSQPRSRRDAA.

This sequence belongs to the universal ribosomal protein uS3 family. In terms of assembly, part of the 30S ribosomal subunit. Forms a tight complex with proteins S10 and S14.

Its function is as follows. Binds the lower part of the 30S subunit head. Binds mRNA in the 70S ribosome, positioning it for translation. In Bradyrhizobium sp. (strain BTAi1 / ATCC BAA-1182), this protein is Small ribosomal subunit protein uS3.